A 70-amino-acid polypeptide reads, in one-letter code: Large ribosomal subunit protein bL31 (70 aa).

Position 8 is an N6-acetyllysine (lysine 8). Residues cysteine 16, cysteine 18, cysteine 37, and cysteine 40 each coordinate Zn(2+).

Belongs to the bacterial ribosomal protein bL31 family. Type A subfamily. Part of the 50S ribosomal subunit. Zn(2+) is required as a cofactor.

Binds the 23S rRNA. In Escherichia coli O6:K15:H31 (strain 536 / UPEC), this protein is Large ribosomal subunit protein bL31.